The chain runs to 65 residues: Large ribosomal subunit protein bL35 (65 aa).

It belongs to the bacterial ribosomal protein bL35 family.

The protein is Large ribosomal subunit protein bL35 of Geobacter sp. (strain M21).